The following is a 1040-amino-acid chain: Nucleotide-binding oligomerization domain-containing protein 2 (1040 aa).

CARD domains are found at residues 26–122 (CEMC…LHGC) and 126–218 (HSLH…EAAT). The short motif at 63-77 (WEVLSWEDYEGFHLL) is the ATG16L1-binding motif element. Residues T239, Y252, T253, G302, S303, G304, K305, S306, and T307 each contribute to the ADP site. A required for CARD9 binding region spans residues 241 to 274 (DGAETLCLEDIYTENVLEVWADVGMAGPPQKSPA). One can recognise an NACHT domain in the interval 293 to 618 (DTVLVVGEAG…FFAAFYLALS (326 aa)). 299-306 (GEAGSGKS) serves as a coordination point for ATP. Residue C395 is the site of S-palmitoyl cysteine attachment. H603 lines the ADP pocket. LRR repeat units follow at residues 791–812 (RPVA…QLLP), 816–839 (VCKA…IECA), 844–865 (QLQK…SMAK), 872–884 (NFLA…NYIT), 900–920 (SLQF…QALA), 928–949 (SLRW…ALAL), 956–976 (MLEE…CSLA), 984–1005 (SLKI…ALLQ), and 1012–1032 (TILE…DKLG). The S-palmitoyl cysteine moiety is linked to residue C1033.

The protein belongs to the NOD1-NOD2 family. In terms of assembly, homooligomer: homooligomerizes following muramyl dipeptide (MDP)-binding, promoting RIPK2 recruitment. Interacts (via CARD domain) with RIPK2 (via CARD domain). Following RIPK2 recruitment, RIPK2 homooligomerizes via its CARD domain and forms long filaments named RIPosomes. Interacts (via CARD domain) with ubiquitin; inhibiting interaction with RIPK2. Component of a signaling complex consisting of ARHGEF2, NOD2 and RIPK2. Interacts with ANKRD17 (via N-terminus). Interacts with HSPA1A; the interaction enhances NOD2 stability. Interacts (via both CARD domains) with HSP90; the interaction enhances NOD2 stability. Interacts (via CARD domain) with SOCS3; the interaction promotes NOD2 degradation. Interacts (via CARD domain) with ERBIN; the interaction inhibits activation of NOD2. Interacts with MAPKBP1; the interaction is enhanced in the presence of muramyl dipeptide (MDP) and inhibits NOD2 homooligomerization and activation. Interacts with INAVA; the interaction takes place upon Pattern recognition receptor (PRR) stimulation. Interacts (via NACHT domain) with CARD9. Interacts (via CARD domain) with CASP1; this interaction leads to IL1B processing. Also interacts with CASP4. Interacts with NLRP1; this interaction is enhanced in the presence of muramyl dipeptide (MDP) and leads to increased IL1B release. Interacts with NLRP12; this interaction promotes degradation of NOD2 through the ubiquitin-proteasome pathway. Interacts with ANKHD1, C10orf67, CHMP5, DOCK7, ENTR1, KRT15, LDOC1, PPP1R12C, PPP2R3B, TRIM41 and VIM. Interacts with MAVS; interaction takes place following single-stranded RNA (ssRNA)-binding. Interacts with ATG16L1. Interacts with IRGM; promoting IRGM 'Lys-63'-linked polyubiquitination, which is required for interactions with the core autophagy factors. Palmitoylated by ZDHHC5; palmitoylation is required for proper recruitment to the bacterial entry site and hence for proper signaling upon cognate peptidoglycan detection. Palmitoylation promotes localization to the cell membrane. Palmitoylation protects from SQSTM1/p62-dependent autophagic degradation. In terms of processing, polyubiquitinated by TRIM27, leading to proteasome-mediated degradation. Polyubiquitinated and degraded following muramyl dipeptide (MDP) stimulation, conferring MDP tolerance and preventing septic shock. Post-translationally, degraded via selective autophagy following interaction with IRGM. IRGM promotes NOD2-RIPK2 RIPosome recruitment to autophagosome membranes, promoting their SQSTM1/p62-dependent autophagic degradation. O-glycosylated by OGT, O-GlcNAcylation increases protein stability. As to expression, expressed in monocytes, macrophages, dendritic cells, hepatocytes, preadipocytes, epithelial cells of oral cavity, lung and intestine, with higher expression in ileal Paneth cells and in intestinal stem cells. In terms of tissue distribution, expressed at higher level in leukocytes.

The protein resides in the cell membrane. It is found in the basolateral cell membrane. Its subcellular location is the cytoplasm. It localises to the mitochondrion. Its activity is regulated as follows. ADP-binding promotes an inactive closed conformation. Its function is as follows. Pattern recognition receptor (PRR) that detects bacterial peptidoglycan fragments and other danger signals and plays an important role in gastrointestinal immunity. Specifically activated by muramyl dipeptide (MDP), a fragment of bacterial peptidoglycan found in every bacterial peptidoglycan type. NOD2 specifically recognizes and binds 6-O-phospho-MDP, the phosphorylated form of MDP, which is generated by NAGK. 6-O-phospho-MDP-binding triggers oligomerization that facilitates the binding and subsequent activation of the proximal adapter receptor-interacting RIPK2. Following recruitment, RIPK2 undergoes 'Met-1'- (linear) and 'Lys-63'-linked polyubiquitination by E3 ubiquitin-protein ligases XIAP, BIRC2, BIRC3 and the LUBAC complex, becoming a scaffolding protein for downstream effectors, triggering activation of the NF-kappa-B and MAP kinases signaling. This in turn leads to the transcriptional activation of hundreds of genes involved in immune response. Its ability to detect bacterial MDP plays a central role in maintaining the equilibrium between intestinal microbiota and host immune responses to control inflammation. An imbalance in this relationship results in dysbiosis, whereby pathogenic bacteria prevail on commensals, causing damage in the intestinal epithelial barrier as well as allowing bacterial invasion and inflammation. Acts as a regulator of appetite by sensing MDP in a subset of brain neurons: microbiota-derived MDP reach the brain, where they bind and activate NOD2 in inhibitory hypothalamic neurons, decreasing neuronal activity, thereby regulating satiety and body temperature. NOD2-dependent MDP-sensing of bacterial cell walls in the intestinal epithelial compartment contributes to sustained postnatal growth upon undernutrition. Also plays a role in antiviral response by acting as a sensor of single-stranded RNA (ssRNA) from viruses: upon ssRNA-binding, interacts with MAVS, leading to activation of interferon regulatory factor-3/IRF3 and expression of type I interferon. Also acts as a regulator of autophagy in dendritic cells via its interaction with ATG16L1, possibly by recruiting ATG16L1 at the site of bacterial entry. NOD2 activation in the small intestine crypt also contributes to intestinal stem cells survival and function: acts by promoting mitophagy via its association with ATG16L1. In addition to its main role in innate immunity, also regulates the adaptive immune system by acting as regulator of helper T-cell and regulatory T-cells (Tregs). Besides recognizing pathogens, also involved in the endoplasmic reticulum stress response: acts by sensing and binding to the cytosolic metabolite sphingosine-1-phosphate generated in response to endoplasmic reticulum stress, initiating an inflammation process that leads to activation of the NF-kappa-B and MAP kinases signaling. May also be involved in NLRP1 activation following activation by MDP, leading to CASP1 activation and IL1B release in macrophages. In terms of biological role, acts as a pattern recognition receptor (PRR); able to activate NF-kappa-B. Functionally, can activate NF-kappa-B in a muramyl dipeptide (MDP)-independent manner. This is Nucleotide-binding oligomerization domain-containing protein 2 from Homo sapiens (Human).